A 440-amino-acid chain; its full sequence is Enolase (440 aa).

Q163 provides a ligand contact to (2R)-2-phosphoglycerate. The active-site Proton donor is the E205. Residues D242, E288, and D315 each coordinate Mg(2+). Residues K340, R369, S370, and K391 each contribute to the (2R)-2-phosphoglycerate site. Catalysis depends on K340, which acts as the Proton acceptor.

The protein belongs to the enolase family. Mg(2+) serves as cofactor.

It localises to the cytoplasm. It is found in the secreted. The protein localises to the cell surface. It catalyses the reaction (2R)-2-phosphoglycerate = phosphoenolpyruvate + H2O. The protein operates within carbohydrate degradation; glycolysis; pyruvate from D-glyceraldehyde 3-phosphate: step 4/5. Functionally, catalyzes the reversible conversion of 2-phosphoglycerate (2-PG) into phosphoenolpyruvate (PEP). It is essential for the degradation of carbohydrates via glycolysis. The polypeptide is Enolase (Limosilactobacillus fermentum (strain NBRC 3956 / LMG 18251) (Lactobacillus fermentum)).